The following is a 383-amino-acid chain: L-aspartate/L-glutamate decarboxylase (383 aa).

Residue K232 is modified to N6-(pyridoxal phosphate)lysine.

Belongs to the group II decarboxylase family. MfnA subfamily. As to quaternary structure, monomer. Pyridoxal 5'-phosphate serves as cofactor.

It carries out the reaction L-aspartate + H(+) = beta-alanine + CO2. The enzyme catalyses L-glutamate + H(+) = 4-aminobutanoate + CO2. The catalysed reaction is L-cysteate + H(+) = taurine + CO2. It catalyses the reaction 3-sulfino-L-alanine + H(+) = hypotaurine + CO2. It participates in cofactor biosynthesis; coenzyme A biosynthesis. Functionally, catalyzes the decarboxylation of L-aspartate to produce beta-alanine, and the decarboxylation of L-glutamate to produce 4-aminobutanoate. Can also use cysteate and, to a lesser extent, cysteine sulfite (3-sulfino-L-alanine), but not L-tyrosine. Specific activities toward L-aspartate and cysteate are higher than toward L-glutamate. The polypeptide is L-aspartate/L-glutamate decarboxylase (Pyrococcus horikoshii (strain ATCC 700860 / DSM 12428 / JCM 9974 / NBRC 100139 / OT-3)).